The following is a 143-amino-acid chain: Nucleoside diphosphate kinase (143 aa).

ATP contacts are provided by Lys11, Phe59, Arg87, Thr93, Arg104, and Asn114. His117 (pros-phosphohistidine intermediate) is an active-site residue.

It belongs to the NDK family. In terms of assembly, homotetramer. Requires Mg(2+) as cofactor.

Its subcellular location is the cytoplasm. It catalyses the reaction dZDP + ATP = dZTP + ADP. It carries out the reaction a 2'-deoxyribonucleoside 5'-diphosphate + ATP = a 2'-deoxyribonucleoside 5'-triphosphate + ADP. The enzyme catalyses a ribonucleoside 5'-diphosphate + ATP = a ribonucleoside 5'-triphosphate + ADP. It functions in the pathway purine metabolism. Its function is as follows. Major role in the synthesis of nucleoside triphosphates other than ATP. The ATP gamma phosphate is transferred to the NDP beta phosphate via a ping-pong mechanism, using a phosphorylated active-site intermediate. In terms of biological role, (Microbial infection) Catalyzes the phosphorylation of dZDP to dZTP, when the bacterium is infected by a phage that produces the substrate for the synthesis of dZTP (2- amino-2'-deoxyadenosine 5'-triphosphate), which is then used by the phage as a DNA polymerase substrate. The protein is Nucleoside diphosphate kinase of Acinetobacter baumannii (strain AB307-0294).